The following is a 96-amino-acid chain: Large ribosomal subunit protein uL23 (96 aa).

It belongs to the universal ribosomal protein uL23 family. As to quaternary structure, part of the 50S ribosomal subunit. Contacts protein L29, and trigger factor when it is bound to the ribosome.

One of the early assembly proteins it binds 23S rRNA. One of the proteins that surrounds the polypeptide exit tunnel on the outside of the ribosome. Forms the main docking site for trigger factor binding to the ribosome. The protein is Large ribosomal subunit protein uL23 of Halalkalibacterium halodurans (strain ATCC BAA-125 / DSM 18197 / FERM 7344 / JCM 9153 / C-125) (Bacillus halodurans).